We begin with the raw amino-acid sequence, 2395 residues long: Centrosomal protein of 295 kDa (2395 aa).

Residues 1-540 (MKRKVMNGKL…KQADHLEVRP (540 aa)) are necessary for centriole targeting and microtubule association. At Ser13 the chain carries Phosphoserine. Coiled-coil stretches lie at residues 53-84 (QRRNQQVSHLAEELRAEWEEAQSQKIQNLEKL), 114-148 (AERKTKAEARHKEALKAQKKQKEMLMKQKTRHIKA), 209-277 (DAHL…KRQT), 488-538 (ARHK…HLEV), and 567-592 (QQNRLHKQTVETARKRLLEYQTVLKE). Disordered regions lie at residues 602–643 (LIPD…PVQP), 660–681 (GHIPQRQGETARAKQSVESQER), and 735–764 (SDSQQISSEDSENISSKPTEPSSSLPLMPE). A Phosphoserine modification is found at Ser634. Residues 735–750 (SDSQQISSEDSENISS) are compositionally biased toward low complexity. The stretch at 817 to 848 (GQLELQKKVLQERQEAQEKLLSCTQKELEEQT) forms a coiled coil. Disordered stretches follow at residues 864–893 (SLPSASAESGNIQTSSTKSDATVSSDSMDN), 966–986 (ADTQSRKIQKPPLPTNKKGLL), and 1212–1272 (VDPE…SKVT). Over residues 1219 to 1250 (FQFSPQTQENRSSQQTGFSSFTPSLRQPSCVS) the composition is skewed to polar residues. Positions 1444-1488 (HDDLQALQQQLDVHREAIRSCQDIQEELLLQRLNKLEQRVSSKQI) form a coiled coil. Ser1565 is modified (phosphoserine). Low complexity predominate over residues 1677-1692 (PWGDSSQGSSSGDQPG). Disordered stretches follow at residues 1677 to 1715 (PWGDSSQGSSSGDQPGAAAVHAEHSGESLGKELSGRASK), 1819 to 1845 (SEEEEEEEACTNLSPLMKPDDEVETQE), 1875 to 1899 (ESFSEQTEHQEQESSSKEEETGSLS), 1989 to 2013 (DLSSPGTSQEDRDFYQQNSESSSEK), and 2354 to 2395 (NKTP…SQCI). The segment covering 1697–1710 (HAEHSGESLGKELS) has biased composition (basic and acidic residues). The segment covering 1880 to 1894 (QTEHQEQESSSKEEE) has biased composition (basic and acidic residues). An ALMS motif region spans residues 2329 to 2395 (SLGEAFMKRK…TAKRNRSQCI (67 aa)). A compositionally biased stretch (basic and acidic residues) spans 2376–2388 (HLKEAVSGDETAK).

As to quaternary structure, interacts (via ALMS motif) with microtubules; this interaction is direct.

Its subcellular location is the cytoplasm. The protein resides in the cytoskeleton. The protein localises to the microtubule organizing center. It is found in the centrosome. It localises to the centriole. Its subcellular location is the spindle. In terms of biological role, centriole-enriched microtubule-binding protein involved in centriole biogenesis. Essential for the generation of the distal portion of new-born centrioles in a CPAP- and CEP120-mediated elongation dependent manner during the cell cycle S/G2 phase after formation of the initiating cartwheel structure. Required for the recruitment of centriolar proteins, such as POC1B, POC5 and CEP135, into the distal portion of centrioles. Also required for centriole-to-centrosome conversion during mitotic progression, but is dispensable for cartwheel removal or centriole disengagement. Binds to and stabilizes centriolar microtubule. May be involved in ciliogenesis. This is Centrosomal protein of 295 kDa from Rattus norvegicus (Rat).